We begin with the raw amino-acid sequence, 554 residues long: Membrane protein insertase YidC (554 aa).

5 consecutive transmembrane segments (helical) span residues 7–24, 362–382, 436–456, 475–495, and 510–530; these read VLWV…DNWQ, FVGN…AVFF, LPVV…LASV, PFFI…SLNP, and PIAF…YYVV.

Belongs to the OXA1/ALB3/YidC family. Type 1 subfamily. Interacts with the Sec translocase complex via SecD. Specifically interacts with transmembrane segments of nascent integral membrane proteins during membrane integration.

It localises to the cell inner membrane. Functionally, required for the insertion and/or proper folding and/or complex formation of integral membrane proteins into the membrane. Involved in integration of membrane proteins that insert both dependently and independently of the Sec translocase complex, as well as at least some lipoproteins. Aids folding of multispanning membrane proteins. The protein is Membrane protein insertase YidC of Burkholderia ambifaria (strain MC40-6).